The primary structure comprises 500 residues: Probable cytosol aminopeptidase (500 aa).

The Mn(2+) site is built by K265 and D270. K277 is a catalytic residue. Mn(2+) is bound by residues D288, D347, and E349. The active site involves R351.

Belongs to the peptidase M17 family. Mn(2+) is required as a cofactor.

The protein localises to the cytoplasm. It catalyses the reaction Release of an N-terminal amino acid, Xaa-|-Yaa-, in which Xaa is preferably Leu, but may be other amino acids including Pro although not Arg or Lys, and Yaa may be Pro. Amino acid amides and methyl esters are also readily hydrolyzed, but rates on arylamides are exceedingly low.. The catalysed reaction is Release of an N-terminal amino acid, preferentially leucine, but not glutamic or aspartic acids.. In terms of biological role, presumably involved in the processing and regular turnover of intracellular proteins. Catalyzes the removal of unsubstituted N-terminal amino acids from various peptides. This is Probable cytosol aminopeptidase from Rickettsia typhi (strain ATCC VR-144 / Wilmington).